The following is a 359-amino-acid chain: tRNA-specific 2-thiouridylase MnmA (359 aa).

ATP-binding positions include 7-14 and Leu-33; that span reads GLSGGVDS. Catalysis depends on Cys-94, which acts as the Nucleophile. Cysteines 94 and 193 form a disulfide. Gly-119 lines the ATP pocket. An interaction with tRNA region spans residues 143 to 145; that stretch reads KDQ. The active-site Cysteine persulfide intermediate is Cys-193. The interaction with tRNA stretch occupies residues 298–299; that stretch reads RY.

Belongs to the MnmA/TRMU family.

It localises to the cytoplasm. The catalysed reaction is S-sulfanyl-L-cysteinyl-[protein] + uridine(34) in tRNA + AH2 + ATP = 2-thiouridine(34) in tRNA + L-cysteinyl-[protein] + A + AMP + diphosphate + H(+). Functionally, catalyzes the 2-thiolation of uridine at the wobble position (U34) of tRNA, leading to the formation of s(2)U34. In Trichodesmium erythraeum (strain IMS101), this protein is tRNA-specific 2-thiouridylase MnmA.